The chain runs to 368 residues: tRNA/tmRNA (uracil-C(5))-methyltransferase (368 aa).

The S-adenosyl-L-methionine site is built by glutamine 186, tyrosine 214, asparagine 219, glutamate 235, and aspartate 295. Residue cysteine 320 is the Nucleophile of the active site. The active-site Proton acceptor is the glutamate 354.

It belongs to the class I-like SAM-binding methyltransferase superfamily. RNA M5U methyltransferase family. TrmA subfamily.

The enzyme catalyses uridine(54) in tRNA + S-adenosyl-L-methionine = 5-methyluridine(54) in tRNA + S-adenosyl-L-homocysteine + H(+). The catalysed reaction is uridine(341) in tmRNA + S-adenosyl-L-methionine = 5-methyluridine(341) in tmRNA + S-adenosyl-L-homocysteine + H(+). Its function is as follows. Dual-specificity methyltransferase that catalyzes the formation of 5-methyluridine at position 54 (m5U54) in all tRNAs, and that of position 341 (m5U341) in tmRNA (transfer-mRNA). This chain is tRNA/tmRNA (uracil-C(5))-methyltransferase, found in Aromatoleum aromaticum (strain DSM 19018 / LMG 30748 / EbN1) (Azoarcus sp. (strain EbN1)).